The chain runs to 298 residues: Ketohexokinase (298 aa).

4 residues coordinate beta-D-fructose: D15, G41, N42, and N45. ATP-binding positions include R108, 226–229 (AEEG), and 255–258 (GAGD). Position 258 (D258) interacts with beta-D-fructose.

The protein belongs to the carbohydrate kinase PfkB family. In terms of assembly, homodimer.

It catalyses the reaction beta-D-fructose + ATP = beta-D-fructose 1-phosphate + ADP + H(+). The protein operates within carbohydrate metabolism; fructose metabolism. Requires potassium. Inhibition by ADP. Its function is as follows. Catalyzes the phosphorylation of the ketose sugar fructose to fructose-1-phosphate. The polypeptide is Ketohexokinase (Mus musculus (Mouse)).